Reading from the N-terminus, the 127-residue chain is uncharacterized protein (127 aa).

The interval 1–24 (PLKTKPIDNNLPHRTGYNQASKQQ) is disordered.

This is an uncharacterized protein from Homo sapiens (Human).